We begin with the raw amino-acid sequence, 280 residues long: L-aspartate dehydrogenase (280 aa).

2 residues coordinate NAD(+): A134 and N202. The active site involves H232.

This sequence belongs to the L-aspartate dehydrogenase family.

The catalysed reaction is L-aspartate + NADP(+) + H2O = oxaloacetate + NH4(+) + NADPH + H(+). It carries out the reaction L-aspartate + NAD(+) + H2O = oxaloacetate + NH4(+) + NADH + H(+). The protein operates within cofactor biosynthesis; NAD(+) biosynthesis; iminoaspartate from L-aspartate (dehydrogenase route): step 1/1. In terms of biological role, specifically catalyzes the NAD or NADP-dependent dehydrogenation of L-aspartate to iminoaspartate. The chain is L-aspartate dehydrogenase from Bradyrhizobium diazoefficiens (strain JCM 10833 / BCRC 13528 / IAM 13628 / NBRC 14792 / USDA 110).